Consider the following 246-residue polypeptide: UPF0309 protein ABC0887 (246 aa).

Residues 33-212 (MVHAIKEGKS…VLKMIEQLEE (180 aa)) form the SIS domain.

It belongs to the UPF0309 family.

The protein is UPF0309 protein ABC0887 of Shouchella clausii (strain KSM-K16) (Alkalihalobacillus clausii).